We begin with the raw amino-acid sequence, 277 residues long: Digeranylgeranylglyceryl phosphate synthase (277 aa).

7 helical membrane passes run P13–L33, A40–F60, V89–I109, F143–L163, R199–Y219, L220–A240, and W256–V276.

The protein belongs to the UbiA prenyltransferase family. DGGGP synthase subfamily. It depends on Mg(2+) as a cofactor.

It is found in the cell membrane. It carries out the reaction sn-3-O-(geranylgeranyl)glycerol 1-phosphate + (2E,6E,10E)-geranylgeranyl diphosphate = 2,3-bis-O-(geranylgeranyl)-sn-glycerol 1-phosphate + diphosphate. It participates in membrane lipid metabolism; glycerophospholipid metabolism. Its function is as follows. Prenyltransferase that catalyzes the transfer of the geranylgeranyl moiety of geranylgeranyl diphosphate (GGPP) to the C2 hydroxyl of (S)-3-O-geranylgeranylglyceryl phosphate (GGGP). This reaction is the second ether-bond-formation step in the biosynthesis of archaeal membrane lipids. This chain is Digeranylgeranylglyceryl phosphate synthase, found in Natronomonas pharaonis (strain ATCC 35678 / DSM 2160 / CIP 103997 / JCM 8858 / NBRC 14720 / NCIMB 2260 / Gabara) (Halobacterium pharaonis).